The primary structure comprises 619 residues: Chaperone protein DnaK (619 aa).

Threonine 179 carries the phosphothreonine; by autocatalysis modification. The tract at residues 584–619 (QAKAQGAAGPQPGAQAQGQPNDGGKEDVVEAEVVDK) is disordered. A compositionally biased stretch (low complexity) spans 585–605 (AKAQGAAGPQPGAQAQGQPND). Residues 606-619 (GGKEDVVEAEVVDK) are compositionally biased toward basic and acidic residues.

The protein belongs to the heat shock protein 70 family.

Acts as a chaperone. The polypeptide is Chaperone protein DnaK (Elusimicrobium minutum (strain Pei191)).